A 179-amino-acid polypeptide reads, in one-letter code: Large ribosomal subunit protein uL6 (179 aa).

Belongs to the universal ribosomal protein uL6 family. Part of the 50S ribosomal subunit.

This protein binds to the 23S rRNA, and is important in its secondary structure. It is located near the subunit interface in the base of the L7/L12 stalk, and near the tRNA binding site of the peptidyltransferase center. The polypeptide is Large ribosomal subunit protein uL6 (Herpetosiphon aurantiacus (strain ATCC 23779 / DSM 785 / 114-95)).